The primary structure comprises 552 residues: Chaperonin GroEL (552 aa).

Residues 30–33, Lys51, 87–91, Gly415, 480–482, and Asp496 contribute to the ATP site; these read TLGP, DGTTT, and NAA.

This sequence belongs to the chaperonin (HSP60) family. As to quaternary structure, forms a cylinder of 14 subunits composed of two heptameric rings stacked back-to-back. Interacts with the co-chaperonin GroES.

It localises to the cytoplasm. The catalysed reaction is ATP + H2O + a folded polypeptide = ADP + phosphate + an unfolded polypeptide.. Together with its co-chaperonin GroES, plays an essential role in assisting protein folding. The GroEL-GroES system forms a nano-cage that allows encapsulation of the non-native substrate proteins and provides a physical environment optimized to promote and accelerate protein folding. This Coxiella burnetii (strain RSA 493 / Nine Mile phase I) protein is Chaperonin GroEL.